We begin with the raw amino-acid sequence, 341 residues long: L-threonine 3-dehydrogenase (341 aa).

Cys-38 contributes to the Zn(2+) binding site. Active-site charge relay system residues include Thr-40 and His-43. Zn(2+)-binding residues include His-63, Glu-64, Cys-93, Cys-96, Cys-99, and Cys-107. NAD(+) contacts are provided by residues Ile-175, Asp-195, Arg-200, 262-264 (LGI), and 286-287 (IY).

The protein belongs to the zinc-containing alcohol dehydrogenase family. In terms of assembly, homotetramer. It depends on Zn(2+) as a cofactor.

The protein resides in the cytoplasm. The enzyme catalyses L-threonine + NAD(+) = (2S)-2-amino-3-oxobutanoate + NADH + H(+). It functions in the pathway amino-acid degradation; L-threonine degradation via oxydo-reductase pathway; glycine from L-threonine: step 1/2. Functionally, catalyzes the NAD(+)-dependent oxidation of L-threonine to 2-amino-3-ketobutyrate. The sequence is that of L-threonine 3-dehydrogenase from Shewanella oneidensis (strain ATCC 700550 / JCM 31522 / CIP 106686 / LMG 19005 / NCIMB 14063 / MR-1).